The primary structure comprises 1277 residues: MAPSKKAGKKVTPKKAAGNNAKSKVAKADWKEGFKKKQVGVTDMTLLTTISNESINENLQKRWTNGEIYTYIGAVLISVNPFRDLGIYTDEVLQRYRGKNRLEVPPHVFSIAESAYYNMNAYHENQCVIISGESGAGKTEAAKQIMQYIAAVSGGQDSGIQEIKDMVLATNPLLESFGCAKTLRNNNSSRHGKYLEIMFNDRGEPVGAQITNYLLEKGRVVGQIENERNFHIFYQFTKAASDEQREAFGLQGPDAYAYTSMSNCLDVQDIDDTRDFEGTINAMQIIGLSPEEQNEIFKMLATILWLGNVQFDENEEGNSVISDTGVTDFVAYLMEVDAATVQKALTTRVMETTRGGRRGSVYDVPLNPSQATSGRDALSKAIYNNLFEWIVAKINVSLKTRSAYSHIIGILDIFGFEIFEDNSFEQLCINYVNEKLQQIFIELTLKTEQEEYVREQIKWTPIKFFNNKVVCDLIEERRPPGIFAALNDACATAHADPTAADNSFIQRSAGLSSNGHFESRGAQFLVRHYAGDVMYNVAGMTDKNKDSLIKDLLDLIGTSGNAFLQNLFPDRPDPNSKKRPPTASDRIKQSAGALVDKLMKSQPSYIRTIKPNGNRSPSEYDTKAILHQIKYLGLQENIRVRRAGFAYRNTFEKMVERFYLLSPKTSYAGEYIWTGDAKSGCEQILKDTGIAKDEWQMGVTKAFIKNPETLFALETMRDRYWHNMAARIQRAFRNYMRYKHECARRIQRFWKNNKEALVYAQVRDYGHQLLAGRKERRRFSLLSYRRFMGDYLDISGKSSLGEEIGEACSLGREPVKFSASARLLVSKLGRSSKPSPRYIVLTPKAVYIVIVTAKDGQAMFSLERKIALVTIKSIQMSTLRDDWFTLNLGPTEEGDPVLSCYFKTEFVTHLMQLTQAGINFNIAPTIEYTKKKEKKAQIKFVKDETIPKDDVYKSHTVHVPSGEPADSVSRPPAKRKAGVVRPITQGKLLRAGGPSKPNNSRPRPTAQPLPGQSKPAVATPSVVSTPAAAAVVSKPKPAASTPAAVRAPAVTPAARSVPPPPPPPPPARAEPEKEMYRAKFDFQGQEGEMSLTKDDEVELIEKDENGWWLVKKDGVEAWAPYNYLERIAPKAAPAPPPPPARPRPTSTVPKPPLSSTTADASAKPVAVFPGMGASNGGPTPWKKSAATTDSTPNSSRPGSAAAKVPPPVAAKPKPPVVAPKPGVPKPGGKPALPTTARPAPSGGGAAAGRLGGGGGGPGQLDLAAALAKRAQRIADED.

Over residues 1–13 (MAPSKKAGKKVTP) the composition is skewed to basic residues. Residues 1–27 (MAPSKKAGKKVTPKKAAGNNAKSKVAK) form a disordered region. Positions 39–718 (VGVTDMTLLT…TLFALETMRD (680 aa)) constitute a Myosin motor domain. An ATP-binding site is contributed by 132–139 (GESGAGKT). S360 bears the Phosphoserine mark. Residues 407-489 (IIGILDIFGF…PGIFAALNDA (83 aa)) are actin-binding. The interval 567-587 (LFPDRPDPNSKKRPPTASDRI) is disordered. IQ domains follow at residues 722–742 (HNMA…KHEC) and 743–768 (ARRI…YGHQ). The region spanning 776–965 (RRRFSLLSYR…TVHVPSGEPA (190 aa)) is the TH1 domain. 2 disordered regions span residues 952 to 1072 (YKSH…AEPE) and 1129 to 1259 (PKAA…GPGQ). Residues 1015–1056 (PAVATPSVVSTPAAAAVVSKPKPAASTPAAVRAPAVTPAARS) show a composition bias toward low complexity. Residues 1057–1068 (VPPPPPPPPPAR) are compositionally biased toward pro residues. One can recognise an SH3 domain in the interval 1071-1129 (PEKEMYRAKFDFQGQEGEMSLTKDDEVELIEKDENGWWLVKKDGVEAWAPYNYLERIAP). Pro residues predominate over residues 1132-1142 (APAPPPPPARP). Polar residues-rich tracts occupy residues 1145 to 1159 (TSTV…TTAD) and 1185 to 1197 (AATT…SSRP). Over residues 1204-1224 (VPPPVAAKPKPPVVAPKPGVP) the composition is skewed to pro residues. The span at 1226 to 1240 (PGGKPALPTTARPAP) shows a compositional bias: low complexity. Positions 1241 to 1258 (SGGGAAAGRLGGGGGGPG) are enriched in gly residues.

This sequence belongs to the TRAFAC class myosin-kinesin ATPase superfamily. Myosin family. Post-translationally, phosphorylation of the TEDS site (Ser-360) is required for the polarization of the actin cytoskeleton. Phosphorylation probably activates the myosin-I ATPase activity.

It is found in the cytoplasm. It localises to the cytoskeleton. The protein localises to the actin patch. In terms of biological role, type-I myosin implicated in the organization of the actin cytoskeleton. Required for proper actin cytoskeleton polarization. At the cell cortex, assembles in patch-like structures together with proteins from the actin-polymerizing machinery and promotes actin assembly. Functions as actin nucleation-promoting factor (NPF) for the Arp2/3 complex. In Coprinopsis cinerea (strain Okayama-7 / 130 / ATCC MYA-4618 / FGSC 9003) (Inky cap fungus), this protein is Myosin-1 (MYO1).